We begin with the raw amino-acid sequence, 371 residues long: S-adenosylmethionine:tRNA ribosyltransferase-isomerase (371 aa).

This sequence belongs to the QueA family. Monomer.

The protein resides in the cytoplasm. It catalyses the reaction 7-aminomethyl-7-carbaguanosine(34) in tRNA + S-adenosyl-L-methionine = epoxyqueuosine(34) in tRNA + adenine + L-methionine + 2 H(+). It functions in the pathway tRNA modification; tRNA-queuosine biosynthesis. Functionally, transfers and isomerizes the ribose moiety from AdoMet to the 7-aminomethyl group of 7-deazaguanine (preQ1-tRNA) to give epoxyqueuosine (oQ-tRNA). The protein is S-adenosylmethionine:tRNA ribosyltransferase-isomerase of Prochlorococcus marinus (strain MIT 9303).